The primary structure comprises 428 residues: Involucrin (428 aa).

Disordered stretches follow at residues 1–128 and 140–398; these read MSQQ…EEKK and KRDD…GQAQ. A compositionally biased stretch (basic and acidic residues) spans 56–76; the sequence is PSKHEEKHVTIVKGVPEHECE. Residues 77–92 are compositionally biased toward low complexity; that stretch reads QQQQAQGQERQQQHWG. Basic and acidic residues-rich tracts occupy residues 107–117, 162–174, and 192–208; these read LKQEEAQREKQ, QLKH…KPLE, and QLKH…HLEQ. Residues 209–218 show a composition bias toward low complexity; that stretch reads QEGQLELPEQ. Positions 220 to 297 are enriched in basic and acidic residues; it reads DQPKHLEQLE…CEGQLEHLEQ (78 aa). Residues 298 to 311 are compositionally biased toward low complexity; it reads QEGQLELPEQQVGQ. Basic and acidic residues-rich tracts occupy residues 313–327, 352–366, and 374–385; these read KHLE…HPEQ and QLKDLEQQERQL.

Belongs to the involucrin family. As to quaternary structure, directly or indirectly cross-linked to cornifelin (CNFN). Substrate of transglutaminase. Specific glutamines or lysines are cross-linked to keratins, desmoplakin and to inter involucrin molecules. Keratinocytes of epidermis and other stratified squamous epithelia.

The protein resides in the cytoplasm. Part of the insoluble cornified cell envelope (CE) of stratified squamous epithelia. This is Involucrin (IVL) from Cebus albifrons (White-fronted capuchin).